A 530-amino-acid polypeptide reads, in one-letter code: Autoinducer-2 kinase (530 aa).

The protein belongs to the FGGY kinase family.

It localises to the cytoplasm. The catalysed reaction is (S)-4,5-dihydroxypentane-2,3-dione + ATP = (2S)-2-hydroxy-3,4-dioxopentyl phosphate + ADP + H(+). Its function is as follows. Catalyzes the phosphorylation of autoinducer-2 (AI-2) to phospho-AI-2, which subsequently inactivates the transcriptional regulator LsrR and leads to the transcription of the lsr operon. Phosphorylates the ring-open form of (S)-4,5-dihydroxypentane-2,3-dione (DPD), which is the precursor to all AI-2 signaling molecules, at the C5 position. This chain is Autoinducer-2 kinase, found in Escherichia coli (strain ATCC 8739 / DSM 1576 / NBRC 3972 / NCIMB 8545 / WDCM 00012 / Crooks).